A 472-amino-acid chain; its full sequence is Flotillin-like protein 6 (472 aa).

C37 carries S-palmitoyl cysteine lipidation. Residues 237–327 (ENQREAEVAQ…ELYKKQKEAE (91 aa)) are a coiled coil.

It belongs to the band 7/mec-2 family. Flotillin subfamily. May be palmitoylated. In terms of tissue distribution, very low occasional expression in roots and nodules.

The protein resides in the cell membrane. It is found in the membrane. The protein localises to the caveola. In terms of biological role, may act as a scaffolding protein within caveolar membranes, functionally participating in formation of caveolae or caveolae-like vesicles. May be involved in nodule formation. This chain is Flotillin-like protein 6 (FLOT6), found in Medicago truncatula (Barrel medic).